We begin with the raw amino-acid sequence, 234 residues long: Mannose/glucose-specific lectin Cramoll (234 aa).

Positions 8 and 10 each coordinate Mn(2+). The Ca(2+) site is built by Asp10, Tyr12, Asn14, and Asp19. Tyr12 is a binding site for a carbohydrate. The Mn(2+) site is built by Asp19, His24, and Ser34. 99–100 serves as a coordination point for a carbohydrate; the sequence is LY. Asp205 contributes to the Ca(2+) binding site. Arg225 is a binding site for a carbohydrate.

It belongs to the leguminous lectin family. As to quaternary structure, homotetramer. In terms of processing, the alpha and beta chains are produced by partial proteolytic processing of the lectin precursor by an asparaginyl endopeptidase.

In terms of biological role, glucose/D-mannose specific lectin. The polypeptide is Mannose/glucose-specific lectin Cramoll (Cratylia mollis (Camaratu bean)).